A 416-amino-acid polypeptide reads, in one-letter code: Inositol polyphosphate multikinase (416 aa).

The tract at residues 1–38 (MATEPPSPLRVEAPGPPEMRTSPAIESTPEGTPQPAGG) is disordered. Ala2 carries the post-translational modification N-acetylalanine. Phosphoserine is present on Ser7. Lys75 lines the ATP pocket. Arg82 contacts substrate. ATP is bound by residues 131 to 133 (EDV) and Asp144. Residues Lys146, 160–167 (KIQQQVSK), and Gln196 contribute to the substrate site. The Nuclear localization signal motif lies at 320 to 330 (RHRKIYTKKHH). Residue Asp385 coordinates ATP. Residue His388 coordinates substrate.

This sequence belongs to the inositol phosphokinase (IPK) family. It depends on Mg(2+) as a cofactor. As to expression, ubiquitous, with the highest expression in skeletal muscle, liver, placenta, lung, peripheral blood leukocytes, kidney, spleen and colon.

It localises to the nucleus. The enzyme catalyses 1D-myo-inositol 1,4,5-trisphosphate + 2 ATP = 1D-myo-inositol 1,3,4,5,6-pentakisphosphate + 2 ADP + 2 H(+). It carries out the reaction 1D-myo-inositol 1,3,4,6-tetrakisphosphate + ATP = 1D-myo-inositol 1,3,4,5,6-pentakisphosphate + ADP + H(+). It catalyses the reaction 1-octadecanoyl-2-(5Z,8Z,11Z,14Z)-eicosatetraenoyl-sn-glycero-3-phospho-1D-myo-inositol 4,5-bisphosphate + ATP = 1-octadecanoyl-2-(5Z,8Z,11Z,14Z-eicosatetraenoyl)-sn-glycero-3-phospho-(1D-myo-inositol 3,4,5-triphosphate) + ADP + H(+). The catalysed reaction is a 1,2-diacyl-sn-glycero-3-phospho-(1D-myo-inositol-4,5-bisphosphate) + ATP = a 1,2-diacyl-sn-glycero-3-phospho-(1D-myo-inositol-3,4,5-trisphosphate) + ADP + H(+). The enzyme catalyses 1D-myo-inositol 1,4,5,6-tetrakisphosphate + ATP = 1D-myo-inositol 1,3,4,5,6-pentakisphosphate + ADP + H(+). The protein operates within phospholipid metabolism; phosphatidylinositol metabolism. Inhibited by flavonoids that occupy the ATP-binding pocket. Inhibited by myricetin, quercetin, luteolin, kaempferol, isorhamnetin and diosmetin, and to a lesser degree by rhamnetin and apigenin. Functionally, inositol phosphate kinase with a broad substrate specificity. Phosphorylates inositol 1,4,5-trisphosphate (Ins(1,4,5)P3) first to inositol 1,3,4,5-tetrakisphosphate and then to inositol 1,3,4,5,6-pentakisphosphate (Ins(1,3,4,5,6)P5). Phosphorylates inositol 1,3,4,6-tetrakisphosphate (Ins(1,3,4,6)P4). Phosphorylates inositol 1,4,5,6-tetrakisphosphate (Ins(1,4,5,6)P4). Phosphorylates glycero-3-phospho-1D-myo-inositol 4,5-bisphosphate to glycero-3-phospho-1D-myo-inositol 3,4,5-trisphosphate. Plays an important role in MLKL-mediated necroptosis via its role in the biosynthesis of inositol pentakisphosphate (InsP5) and inositol hexakisphosphate (InsP6). Binding of these highly phosphorylated inositol phosphates to MLKL mediates the release of an N-terminal auto-inhibitory region, leading to activation of the kinase. Essential for activated phospho-MLKL to oligomerize and localize to the cell membrane during necroptosis. Required for normal embryonic development, probably via its role in the biosynthesis of inositol 1,3,4,5,6-pentakisphosphate (Ins(1,3,4,5,6)P5) and inositol hexakisphosphate (InsP6). The chain is Inositol polyphosphate multikinase (IPMK) from Homo sapiens (Human).